The sequence spans 53 residues: Lantibiotic mutacin-2 (53 aa).

Residues 1-26 (MNKLNSNAVVSLNEVSDSELDTILGG) constitute a propeptide that is removed on maturation. A cross-link (beta-methyllanthionine (Thr-Cys)) is located at residues 36 to 41 (TVSYEC). 2 consecutive cross-links (lanthionine (Ser-Cys)) follow at residues 38–52 (SYEC…VFTC) and 45–53 (SWQHVFTCC). Threonine 51 is modified (2,3-didehydrobutyrine).

Post-translationally, maturation of lantibiotics involves the enzymatic conversion of Thr, and Ser into dehydrated AA and the formation of thioether bonds with cysteine. This is followed by membrane translocation and cleavage of the modified precursor. It is not established whether the 2,3-didehydrobutyrine is the E- or Z-isomer.

Its function is as follows. Lanthionine-containing peptide antibiotic (lantibiotic) active on Gram-positive bacteria including M.luteus, S.aureus, Streptococcus, P.micros, P.acidilactici, C.sporogenes, C.diphtheriae, A.viscosus, G.vaginalis, P.acnes, L.monocytogenes and M.smegmatis, and Gram-negative bacteria including C.jejuni, H.pylori and N.gonorrhoeae. Transiently and partially depolarizes the transmembrane electrical potential and pH gradient of susceptible cells, inhibits the uptake of amino acids and depletes the intracellular ATP pool. This chain is Lantibiotic mutacin-2, found in Streptococcus mutans.